The following is a 385-amino-acid chain: Putative transport protein BpOF4_00890 (385 aa).

8 helical membrane-spanning segments follow: residues 42-62 (TIWIIISILLFLVAAYFILPV), 63-83 (SLPLVAALLTALILTPAVNAL), 93-113 (VAVMLVFTVFVVFIGLSGYYI), 191-211 (SIPGYLVTFLVYLIALFLFML), 255-275 (IIIFIVTLIGLLFIAPEVALL), 276-296 (MAFIIWLIDFVPIIGSIVILA), 304-324 (IVGDVSTGSKLLILAAVLLII), and 350-370 (LGLMLFGVIGFIIGPLLVIAF).

It belongs to the autoinducer-2 exporter (AI-2E) (TC 2.A.86) family.

It is found in the cell membrane. The polypeptide is Putative transport protein BpOF4_00890 (Alkalihalophilus pseudofirmus (strain ATCC BAA-2126 / JCM 17055 / OF4) (Bacillus pseudofirmus)).